Reading from the N-terminus, the 622-residue chain is Cilia- and flagella-associated protein 206 (622 aa).

It belongs to the CFAP206 family.

It localises to the cytoplasm. Its subcellular location is the cytoskeleton. It is found in the cilium axoneme. The protein resides in the cilium basal body. Essential for sperm motility and is involved in the regulation of the beating frequency of motile cilia on the epithelial cells of the respiratory tract. Required for the establishment of radial spokes in sperm flagella. The chain is Cilia- and flagella-associated protein 206 from Bos taurus (Bovine).